Consider the following 114-residue polypeptide: Superoxide dismutase [Cu-Zn] (114 aa).

3 residues coordinate Cu cation: histidine 37, histidine 39, and histidine 54. Positions 54, 62, 71, and 74 each coordinate Zn(2+). The tract at residues 54-80 is disordered; that stretch reads HFNPGNKEHGAPTDGNRHLGDLGNIQA. Basic and acidic residues predominate over residues 59-73; that stretch reads NKEHGAPTDGNRHLG. Histidine 111 provides a ligand contact to Cu cation.

This sequence belongs to the Cu-Zn superoxide dismutase family. Homodimer. It depends on Cu cation as a cofactor. Requires Zn(2+) as cofactor.

The protein resides in the cytoplasm. The catalysed reaction is 2 superoxide + 2 H(+) = H2O2 + O2. Functionally, destroys radicals which are normally produced within the cells and which are toxic to biological systems. In Drosophila tolteca (Fruit fly), this protein is Superoxide dismutase [Cu-Zn].